The chain runs to 57 residues: UPF0391 membrane protein Xaut_1725 (57 aa).

Transmembrane regions (helical) follow at residues 4-24 and 30-50; these read WAVT…GGIA and IAKI…VAGL.

This sequence belongs to the UPF0391 family.

It localises to the cell membrane. In Xanthobacter autotrophicus (strain ATCC BAA-1158 / Py2), this protein is UPF0391 membrane protein Xaut_1725.